We begin with the raw amino-acid sequence, 79 residues long: Conotoxin ArMSGL-021 (79 aa).

The N-terminal stretch at 1 to 20 (MSRLGIMVLTLLLLVFIVTS) is a signal peptide. Positions 21–44 (HQDAGEKQATHRGAINFRWRRSLI) are excised as a propeptide. Disulfide bonds link C52–C64, C56–C73, and C63–C77. L78 bears the Leucine amide mark.

This sequence belongs to the conotoxin O3 superfamily. In terms of tissue distribution, expressed by the venom duct.

It localises to the secreted. In Conus arenatus (Sand-dusted cone), this protein is Conotoxin ArMSGL-021.